Here is a 326-residue protein sequence, read N- to C-terminus: Protein TMED8 (326 aa).

A disordered region spans residues 1 to 99; that stretch reads MSDRQAAEGP…EGQAPGEQAA (99 aa). Low complexity predominate over residues 50-65; sequence SSPLASASDPAAESSP. One can recognise a GOLD domain in the interval 160-324; the sequence is PPCVWTFAKV…NKTLYFHIYY (165 aa). The residue at position 170 (Lys170) is an N6-acetyllysine. Positions 234 to 268 are disordered; sequence VQVSDSSEDEEEEEDEEEEIEEPVPVGDVERGSRS. Residues 239–255 show a composition bias toward acidic residues; that stretch reads SSEDEEEEEDEEEEIEE.

In Mus musculus (Mouse), this protein is Protein TMED8 (Tmed8).